A 120-amino-acid chain; its full sequence is Holo-[acyl-carrier-protein] synthase (120 aa).

Mg(2+)-binding residues include Asp-6 and Glu-55.

Belongs to the P-Pant transferase superfamily. AcpS family. It depends on Mg(2+) as a cofactor.

It is found in the cytoplasm. The enzyme catalyses apo-[ACP] + CoA = holo-[ACP] + adenosine 3',5'-bisphosphate + H(+). In terms of biological role, transfers the 4'-phosphopantetheine moiety from coenzyme A to a Ser of acyl-carrier-protein. The protein is Holo-[acyl-carrier-protein] synthase of Pelodictyon phaeoclathratiforme (strain DSM 5477 / BU-1).